A 201-amino-acid polypeptide reads, in one-letter code: Recombination protein RecR (201 aa).

Residues Cys-60–Cys-75 form a C4-type zinc finger. Positions Ser-83–Pro-178 constitute a Toprim domain.

The protein belongs to the RecR family.

In terms of biological role, may play a role in DNA repair. It seems to be involved in an RecBC-independent recombinational process of DNA repair. It may act with RecF and RecO. In Rhizobium rhizogenes (strain K84 / ATCC BAA-868) (Agrobacterium radiobacter), this protein is Recombination protein RecR.